We begin with the raw amino-acid sequence, 143 residues long: Subtelomeric hrmA-associated cluster protein cgnA (143 aa).

29 G-Q-I/R/S repeats span residues 11–13 (GQI), 14–16 (GPI), 17–19 (GQR), 20–22 (GQS), 23–25 (GQR), 26–28 (GQS), 29–31 (GQR), 32–34 (GQS), 35–37 (GQI), 38–40 (GQS), 41–43 (GQS), 44–46 (GQS), 47–49 (GQI), 50–52 (GQI), 53–55 (GQI), 56–58 (GQI), 59–61 (GQI), 62–64 (GQI), 65–67 (GQI), 68–70 (GQI), 71–73 (GQI), 74–76 (GQI), 77–79 (GQI), 80–82 (GQI), 83–85 (GQI), 86–88 (GQI), 89–91 (GQI), 92–94 (GQI), and 95–97 (GQA). The Collagen-like domain occupies 11 to 68 (GQIGPIGQRGQSGQRGQSGQRGQSGQIGQSGQSGQSGQIGQIGQIGQIGQIGQIGQIG). The interval 11–97 (GQIGPIGQRG…IGQIGQIGQA (87 aa)) is 29 X 3 AA approximate tandem repeats of G-Q-I/R/S. The disordered stretch occupies residues 16 to 49 (IGQRGQSGQRGQSGQRGQSGQIGQSGQSGQSGQI).

The protein resides in the secreted. Functionally, collagen-like protein; part of the subtelomeric hrmA-associated cluster (HAC) containing genes that alter the hyphal surface (such as reduced total chitin or increased beta-glucan exposure) and perturb inter-hyphal interactions within the developing biofilms, resulting in a loss of vertically aligned polarized growing filaments. Consequently, this hypoxia-typic morphotype (called H-MORPH) with altered biofilm architecture leads to increased hypoxia fitness, increased host inflammation, rapid disease progression, and mortality in a murine model of invasive aspergillosis. CgnA is directly involved in the reduction of total surface chitin and the increase of beta-glucan exposure, and mediates the detachment of the extracellular matrix and especially of its component galactosaminogalactan (GAG). The polypeptide is Subtelomeric hrmA-associated cluster protein cgnA (Aspergillus fumigatus (strain ATCC MYA-4609 / CBS 101355 / FGSC A1100 / Af293) (Neosartorya fumigata)).